The following is a 112-amino-acid chain: Ribonuclease P protein component (112 aa).

It belongs to the RnpA family. As to quaternary structure, consists of a catalytic RNA component (M1 or rnpB) and a protein subunit.

It catalyses the reaction Endonucleolytic cleavage of RNA, removing 5'-extranucleotides from tRNA precursor.. Its function is as follows. RNaseP catalyzes the removal of the 5'-leader sequence from pre-tRNA to produce the mature 5'-terminus. It can also cleave other RNA substrates such as 4.5S RNA. The protein component plays an auxiliary but essential role in vivo by binding to the 5'-leader sequence and broadening the substrate specificity of the ribozyme. In Mesomycoplasma hyopneumoniae (strain 7448) (Mycoplasma hyopneumoniae), this protein is Ribonuclease P protein component.